The following is a 970-amino-acid chain: Disks large 1 tumor suppressor protein (970 aa).

Positions 4 to 64 (KKQEAHRALE…FYELTLLDDS (61 aa)) constitute an L27 domain. Residues 161 to 209 (TENAKEPTVEQQQKQQQAQQRSSRSPQQQNPQQQQGSKSRSGSQTVNGD) form a disordered region. The span at 171 to 204 (QQQKQQQAQQRSSRSPQQQNPQQQQGSKSRSGSQ) shows a compositional bias: low complexity. PDZ domains follow at residues 216–303 (DIQL…KRKR) and 330–421 (EIDL…GKTQ). A disordered region spans residues 424 to 477 (TTSASGGGGGGLSSGQQLSQSQSQLATSQSQSQVHQQQHATPMVNSQSTEPGSR). Positions 437-462 (SGQQLSQSQSQLATSQSQSQVHQQQH) are enriched in low complexity. Polar residues predominate over residues 466-477 (MVNSQSTEPGSR). Ser-496 carries the post-translational modification Phosphoserine. A PDZ 3 domain is found at 506-587 (TITIQKGPQG…VVTLLAQYRP (82 aa)). Positions 620-690 (KRSLYVRALF…PSKRRWERKM (71 aa)) constitute an SH3 domain. Thr-714 is subject to Phosphothreonine. Residues 780 to 955 (TRPVIILGPL…IYSKVKSMIW (176 aa)) enclose the Guanylate kinase-like domain.

This sequence belongs to the MAGUK family. As to expression, during the cellular blastoderm stage, isoform B, isoform F, isoform H, isoform I and isoform L expression is localized to the cell borders. From stage 11 onwards, expression is found predominantly in the developing nervous system: axon bundles in the ventral cord and the brain. Stage 14 and 15 embryos exhibit expression in the developing body wall muscle. Expression in neuropil regions of the CNS and at NMJs persists through to larval development. Other isoforms show expression in embryonic epithelial cells. In larvae, expression is seen as a belt around salivary glands, imaginal disks and proventriculus. Expressed in adult reproductive tissues. In epithelia, coexpressed with scrib throughout development.

The protein resides in the cytoplasm. Its subcellular location is the cell membrane. It localises to the basolateral cell membrane. The protein localises to the cytoskeleton. It is found in the cell junction. The protein resides in the septate junction. During embryonic development, some isoforms are essential for proper neuronal differentiation and organization. Required for cell polarity; maintenance of apicobasal polarity. Plays a critical role at septate junctions in cellular growth control during larval development. The presence of a guanylate kinase domain suggests involvement in cellular adhesion as well as signal transduction to control cellular proliferation. This is Disks large 1 tumor suppressor protein (dlg1) from Drosophila melanogaster (Fruit fly).